Here is a 189-residue protein sequence, read N- to C-terminus: Large ribosomal subunit protein bL17 (189 aa).

A disordered region spans residues D126–N189. Residues Q139–D180 are compositionally biased toward low complexity.

This sequence belongs to the bacterial ribosomal protein bL17 family. As to quaternary structure, part of the 50S ribosomal subunit. Contacts protein L32.

The sequence is that of Large ribosomal subunit protein bL17 from Mycobacterium marinum (strain ATCC BAA-535 / M).